Consider the following 434-residue polypeptide: Glutamate/glutamine/aspartate/asparagine transport system permease protein BztC (434 aa).

10 helical membrane passes run 41–61 (LTVF…PWLL), 113–133 (LFVT…DALP), 135–155 (KLIW…WGGP), 156–176 (IWGP…FTAL), 180–200 (LGVP…WLYA), 227–247 (FLLA…LGIL), 272–292 (GVPL…FLPP), 298–318 (LILR…AEVI), 360–380 (IVSS…VGLF), and 398–418 (GTYW…NFSM). The ABC transmembrane type-1 domain occupies 227–422 (FLLALVIGVT…LFNFSMSRYS (196 aa)).

This sequence belongs to the binding-protein-dependent transport system permease family. HisMQ subfamily. In terms of assembly, bztB and BztC form a heterodimer which can form a membrane complex with a homodimer of BztD.

The protein resides in the cell inner membrane. Part of a binding-protein-dependent transport system for glutamate, glutamine, aspartate and asparagine. Probably responsible for the translocation of the substrate across the membrane. The polypeptide is Glutamate/glutamine/aspartate/asparagine transport system permease protein BztC (bztC) (Rhodobacter capsulatus (strain ATCC BAA-309 / NBRC 16581 / SB1003)).